The following is a 153-amino-acid chain: Ribosome maturation factor RimP (153 aa).

Belongs to the RimP family.

It localises to the cytoplasm. Its function is as follows. Required for maturation of 30S ribosomal subunits. The polypeptide is Ribosome maturation factor RimP (Clostridium botulinum (strain Okra / Type B1)).